The sequence spans 346 residues: Biotin synthase (346 aa).

The Radical SAM core domain maps to 40 to 264; the sequence is NEVQVSTLLS…MMPHSHVRLS (225 aa). The [4Fe-4S] cluster site is built by cysteine 55, cysteine 59, and cysteine 62. [2Fe-2S] cluster-binding residues include cysteine 99, cysteine 130, cysteine 190, and arginine 262.

The protein belongs to the radical SAM superfamily. Biotin synthase family. In terms of assembly, homodimer. Requires [4Fe-4S] cluster as cofactor. [2Fe-2S] cluster serves as cofactor.

The catalysed reaction is (4R,5S)-dethiobiotin + (sulfur carrier)-SH + 2 reduced [2Fe-2S]-[ferredoxin] + 2 S-adenosyl-L-methionine = (sulfur carrier)-H + biotin + 2 5'-deoxyadenosine + 2 L-methionine + 2 oxidized [2Fe-2S]-[ferredoxin]. It functions in the pathway cofactor biosynthesis; biotin biosynthesis; biotin from 7,8-diaminononanoate: step 2/2. Functionally, catalyzes the conversion of dethiobiotin (DTB) to biotin by the insertion of a sulfur atom into dethiobiotin via a radical-based mechanism. This chain is Biotin synthase, found in Colwellia psychrerythraea (strain 34H / ATCC BAA-681) (Vibrio psychroerythus).